Here is a 142-residue protein sequence, read N- to C-terminus: Translation initiation factor 2 subunit beta (142 aa).

The protein belongs to the eIF-2-beta/eIF-5 family. In terms of assembly, heterotrimer composed of an alpha, a beta and a gamma chain.

Functionally, eIF-2 functions in the early steps of protein synthesis by forming a ternary complex with GTP and initiator tRNA. This is Translation initiation factor 2 subunit beta from Thermococcus kodakarensis (strain ATCC BAA-918 / JCM 12380 / KOD1) (Pyrococcus kodakaraensis (strain KOD1)).